Here is a 443-residue protein sequence, read N- to C-terminus: sn-2 acyl-lipid omega-3 desaturase (ferredoxin), chloroplastic (443 aa).

The transit peptide at 1-51 (MAGLVLSGCAIKPFSQSLPIPTKRFITNPSNINLLHPKDPIFSPNFHGFSR) directs the protein to the chloroplast. The next 2 membrane-spanning stretches (helical) occupy residues 120–140 (MSYV…AAHL) and 143–163 (WLVW…LFVL). The short motif at 165-169 (HDCGH) is the Histidine box-1 element. Residues 201-205 (HRTHH) carry the Histidine box-2 motif. The next 2 membrane-spanning stretches (helical) occupy residues 281–301 (TICW…VGPV) and 304–324 (LKLY…VTYL). A Histidine box-3 motif is present at residues 368-372 (HVIHH).

The protein belongs to the fatty acid desaturase type 1 family. Highly expressed in leaves and cotyledons, while no or little expression detected in mature seeds, roots and stems.

The protein resides in the plastid. The protein localises to the chloroplast membrane. It carries out the reaction a (7Z,10Z)-hexadecadienoyl-containing glycerolipid + 2 reduced [2Fe-2S]-[ferredoxin] + O2 + 2 H(+) = a (7Z,10Z,13Z)-hexadecatrienoyl-containing glycerolipid + 2 oxidized [2Fe-2S]-[ferredoxin] + 2 H2O. It catalyses the reaction a (9Z,12Z)-octadecadienoyl-containing glycerolipid + 2 reduced [2Fe-2S]-[ferredoxin] + O2 + 2 H(+) = (9Z,12Z,15Z)-octadecatrienoyl-containing glycerolipid + 2 oxidized [2Fe-2S]-[ferredoxin] + 2 H2O. The protein operates within lipid metabolism; polyunsaturated fatty acid biosynthesis. Chloroplast omega-3 fatty acid desaturase introduces the third double bond in the biosynthesis of 18:3, and probably also 16:3 fatty acids, important constituents of plant membranes. It is thought to use ferredoxin as an electron donor and to act on fatty acids esterified to galactolipids, sulfolipids and phosphatidylglycerol. In Helianthus annuus (Common sunflower), this protein is sn-2 acyl-lipid omega-3 desaturase (ferredoxin), chloroplastic.